Consider the following 114-residue polypeptide: Pole-localizer protein TmaR (114 aa).

Residues Arg70–Asn111 are a coiled coil. The disordered stretch occupies residues Lys89–Lys114.

It belongs to the pole-localizer TmaR family.

Its subcellular location is the cytoplasm. Pole-localizer protein involved in the regulation of several cellular processes. This is Pole-localizer protein TmaR from Haemophilus influenzae (strain PittEE).